We begin with the raw amino-acid sequence, 65 residues long: DNA gyrase inhibitor YacG (65 aa).

Zn(2+)-binding residues include C10, C13, C29, and C33. Residues 45–65 are disordered; that stretch reads EKAIPGAPDMSDSDGWSEDQY. Over residues 55-65 the composition is skewed to acidic residues; the sequence is SDSDGWSEDQY.

The protein belongs to the DNA gyrase inhibitor YacG family. In terms of assembly, interacts with GyrB. Zn(2+) serves as cofactor.

Functionally, inhibits all the catalytic activities of DNA gyrase by preventing its interaction with DNA. Acts by binding directly to the C-terminal domain of GyrB, which probably disrupts DNA binding by the gyrase. In Vibrio cholerae serotype O1 (strain ATCC 39315 / El Tor Inaba N16961), this protein is DNA gyrase inhibitor YacG.